We begin with the raw amino-acid sequence, 131 residues long: Small ribosomal subunit protein uS9c (131 aa).

This sequence belongs to the universal ribosomal protein uS9 family.

It is found in the plastid. The protein localises to the chloroplast. The chain is Small ribosomal subunit protein uS9c (rps9) from Emiliania huxleyi (Coccolithophore).